The chain runs to 436 residues: Trigger factor (436 aa).

In terms of domain architecture, PPIase FKBP-type spans 163-248 (GDRVVLDFAG…VKEVAEGVLP (86 aa)).

The protein belongs to the FKBP-type PPIase family. Tig subfamily.

The protein resides in the cytoplasm. It catalyses the reaction [protein]-peptidylproline (omega=180) = [protein]-peptidylproline (omega=0). Functionally, involved in protein export. Acts as a chaperone by maintaining the newly synthesized protein in an open conformation. Functions as a peptidyl-prolyl cis-trans isomerase. The chain is Trigger factor from Bordetella parapertussis (strain 12822 / ATCC BAA-587 / NCTC 13253).